Consider the following 153-residue polypeptide: Endoribonuclease YbeY (153 aa).

The Zn(2+) site is built by His-119, His-123, and His-129.

Belongs to the endoribonuclease YbeY family. Requires Zn(2+) as cofactor.

Its subcellular location is the cytoplasm. Single strand-specific metallo-endoribonuclease involved in late-stage 70S ribosome quality control and in maturation of the 3' terminus of the 16S rRNA. In Desulforamulus reducens (strain ATCC BAA-1160 / DSM 100696 / MI-1) (Desulfotomaculum reducens), this protein is Endoribonuclease YbeY.